The chain runs to 178 residues: Thioredoxin F1, chloroplastic (178 aa).

The disordered stretch occupies residues 1–22 (MPLSLRLSPSPTALSPTTGGFG). A chloroplast-targeting transit peptide spans 1–57 (MPLSLRLSPSPTALSPTTGGFGPSRKQCRIPYSGVPTTKIGFCSLDSRKRGDSSVVR). Residues 7–18 (LSPSPTALSPTT) are compositionally biased toward polar residues. Residues 58-174 (CSLETVNVSV…LVAAIETARS (117 aa)) enclose the Thioredoxin domain. Catalysis depends on nucleophile residues cysteine 99 and cysteine 102. Cysteine 99 and cysteine 102 are joined by a disulfide. Position 126 is an S-glutathionyl cysteine; transient (cysteine 126).

The protein belongs to the thioredoxin family. Plant F-type subfamily. In terms of processing, glutathionylation at Cys-126 decreases its ability to be reduced by ferredoxin-thioredoxin reductase and reduces its efficiency in activating target chloroplastic enzymes.

The protein resides in the plastid. It is found in the chloroplast stroma. Its function is as follows. Thiol-disulfide oxidoreductase involved in the redox regulation of enzymes of both reductive pentose phosphate pathway (Calvin-Benson cycle) and oxidative pentose phosphate pathway. Under light or reducing conditions, activates in chloroplast the glyceraldehyde-3-phosphate dehydrogenase, the phosphoribulokinase and the fructose-1,6-bisphosphate phosphatase, and inhibits the glucose-6-phosphate dehydrogenase. This is Thioredoxin F1, chloroplastic from Arabidopsis thaliana (Mouse-ear cress).